Reading from the N-terminus, the 447-residue chain is Phosphoglucosamine mutase (447 aa).

The active-site Phosphoserine intermediate is S106. 4 residues coordinate Mg(2+): S106, D245, D247, and D249. S106 bears the Phosphoserine mark.

Belongs to the phosphohexose mutase family. Mg(2+) is required as a cofactor. Activated by phosphorylation.

The catalysed reaction is alpha-D-glucosamine 1-phosphate = D-glucosamine 6-phosphate. Functionally, catalyzes the conversion of glucosamine-6-phosphate to glucosamine-1-phosphate. The polypeptide is Phosphoglucosamine mutase (Cupriavidus taiwanensis (strain DSM 17343 / BCRC 17206 / CCUG 44338 / CIP 107171 / LMG 19424 / R1) (Ralstonia taiwanensis (strain LMG 19424))).